The following is a 207-amino-acid chain: Glycerol-3-phosphate acyltransferase (207 aa).

The next 5 membrane-spanning stretches (helical) occupy residues 3–23 (LIGL…VWVG), 54–74 (TIVM…PIVF), 81–101 (GTAT…VSIF), 122–142 (PIMF…TSIV), and 158–178 (LVFQ…FVFY).

Belongs to the PlsY family. Probably interacts with PlsX.

The protein localises to the cell membrane. The catalysed reaction is an acyl phosphate + sn-glycerol 3-phosphate = a 1-acyl-sn-glycero-3-phosphate + phosphate. The protein operates within lipid metabolism; phospholipid metabolism. Functionally, catalyzes the transfer of an acyl group from acyl-phosphate (acyl-PO(4)) to glycerol-3-phosphate (G3P) to form lysophosphatidic acid (LPA). This enzyme utilizes acyl-phosphate as fatty acyl donor, but not acyl-CoA or acyl-ACP. This is Glycerol-3-phosphate acyltransferase from Levilactobacillus brevis (strain ATCC 367 / BCRC 12310 / CIP 105137 / JCM 1170 / LMG 11437 / NCIMB 947 / NCTC 947) (Lactobacillus brevis).